A 264-amino-acid polypeptide reads, in one-letter code: Phosphonoacetaldehyde hydrolase (264 aa).

Catalysis depends on D9, which acts as the Nucleophile. Mg(2+) contacts are provided by D9 and A11. The active-site Schiff-base intermediate with substrate is K50. Mg(2+) is bound at residue D183.

The protein belongs to the HAD-like hydrolase superfamily. PhnX family. As to quaternary structure, homodimer. The cofactor is Mg(2+).

The catalysed reaction is phosphonoacetaldehyde + H2O = acetaldehyde + phosphate + H(+). Involved in phosphonate degradation. This Bacillus cereus (strain ZK / E33L) protein is Phosphonoacetaldehyde hydrolase.